Here is a 26-residue protein sequence, read N- to C-terminus: Thioredoxin H-type (26 aa).

This sequence belongs to the thioredoxin family. Plant H-type subfamily.

Its subcellular location is the cytoplasm. Functionally, participates in various redox reactions through the reversible oxidation of the active center dithiol to a disulfide. The H form is known to activate a number of cytosolic enzymes. This is Thioredoxin H-type from Populus euphratica (Euphrates poplar).